The sequence spans 113 residues: Large ribosomal subunit protein bL19 (113 aa).

Belongs to the bacterial ribosomal protein bL19 family.

Its function is as follows. This protein is located at the 30S-50S ribosomal subunit interface and may play a role in the structure and function of the aminoacyl-tRNA binding site. This is Large ribosomal subunit protein bL19 from Desulfitobacterium hafniense (strain DSM 10664 / DCB-2).